Consider the following 342-residue polypeptide: Anthranilate phosphoribosyltransferase (342 aa).

Residues Gly79, Gly82–Asp83, Thr87, Asn89–Thr92, Lys107–Ser115, and Ser119 each bind 5-phospho-alpha-D-ribose 1-diphosphate. Gly79 serves as a coordination point for anthranilate. Ser91 contacts Mg(2+). Asn110 provides a ligand contact to anthranilate. Anthranilate is bound at residue Arg165. The Mg(2+) site is built by Asp223 and Glu224.

This sequence belongs to the anthranilate phosphoribosyltransferase family. Homodimer. The cofactor is Mg(2+).

It carries out the reaction N-(5-phospho-beta-D-ribosyl)anthranilate + diphosphate = 5-phospho-alpha-D-ribose 1-diphosphate + anthranilate. It participates in amino-acid biosynthesis; L-tryptophan biosynthesis; L-tryptophan from chorismate: step 2/5. Its function is as follows. Catalyzes the transfer of the phosphoribosyl group of 5-phosphorylribose-1-pyrophosphate (PRPP) to anthranilate to yield N-(5'-phosphoribosyl)-anthranilate (PRA). The chain is Anthranilate phosphoribosyltransferase from Buchnera aphidicola subsp. Acyrthosiphon pisum (strain 5A).